We begin with the raw amino-acid sequence, 749 residues long: Protein lin-54 homolog (749 aa).

K139 participates in a covalent cross-link: Glycyl lysine isopeptide (Lys-Gly) (interchain with G-Cter in SUMO2). An N6-acetyllysine mark is found at K244 and K249. S264, S282, S310, and S314 each carry phosphoserine. K357 is covalently cross-linked (Glycyl lysine isopeptide (Lys-Gly) (interchain with G-Cter in SUMO2)). The CRC domain maps to P521–E634. The segment at K523 to Y536 is DNA-binding. C525, C527, C532, C537, C539, C546, C549, C551, and C554 together coordinate Zn(2+). The segment at I583–S596 is linker. C599, C601, C606, C611, C613, C620, C624, C626, and C629 together coordinate Zn(2+). The tract at residues C599–E612 is DNA-binding. S635 is subject to Phosphoserine. Residues K639, K659, and K661 each participate in a glycyl lysine isopeptide (Lys-Gly) (interchain with G-Cter in SUMO2) cross-link.

This sequence belongs to the lin-54 family. In terms of assembly, component of the DREAM complex (also named LINC complex) at least composed of E2F4, E2F5, LIN9, LIN37, LIN52, LIN54, MYBL1, MYBL2, RBL1, RBL2, RBBP4, RBL2, TFDP1 and TFDP2. The complex exists in quiescent cells where it represses cell cycle-dependent genes. It dissociates in S phase when LIN9, LIN37, LIN52 and LIN54 form a subcomplex that binds to MYBL2.

The protein localises to the nucleus. Its function is as follows. Component of the DREAM complex, a multiprotein complex that can both act as a transcription activator or repressor depending on the context. In G0 phase, the complex binds to more than 800 promoters and is required for repression of E2F target genes. In S phase, the complex selectively binds to the promoters of G2/M genes whose products are required for mitosis and participates in their cell cycle dependent activation. In the complex, acts as a DNA-binding protein that binds the promoter of CDK1 in a sequence-specific manner. Specifically recognizes the consensus motif 5'-TTYRAA-3' in target DNA. This chain is Protein lin-54 homolog (Lin54), found in Rattus norvegicus (Rat).